The following is a 1026-amino-acid chain: UPF0182 protein FRAAL6027 (1026 aa).

7 helical membrane-spanning segments follow: residues Ala-13–Phe-33, Ile-60–Leu-80, Tyr-108–Ala-128, Phe-167–His-187, Ala-208–Asp-228, Ala-250–Ile-270, and Leu-283–Ile-303. Residues Ala-877 to Thr-888 show a composition bias toward low complexity. Disordered stretches follow at residues Ala-877–Ala-916 and Leu-958–Gly-1026. Residues Thr-889–Gly-903 are compositionally biased toward gly residues. Residues Pro-970–Gly-1001 are compositionally biased toward low complexity. The segment covering Pro-1016 to Gly-1026 has biased composition (pro residues).

This sequence belongs to the UPF0182 family.

Its subcellular location is the cell membrane. In Frankia alni (strain DSM 45986 / CECT 9034 / ACN14a), this protein is UPF0182 protein FRAAL6027.